A 394-amino-acid chain; its full sequence is 4-O-methyl-glucuronoyl methylesterase (394 aa).

The N-terminal stretch at 1–18 (MVHLTPALLLASAAFAAA) is a signal peptide. 3 disulfides stabilise this stretch: Cys-29-Cys-63, Cys-210-Cys-345, and Cys-242-Cys-317. The GXSYXG catalytic site motif motif lies at 209 to 214 (GCSRNG). The Nucleophile role is filled by Ser-211. The substrate site is built by Lys-215, Gln-257, Glu-265, and Trp-308. His-344 (proton donor/acceptor) is an active-site residue.

Belongs to the carbohydrate esterase 15 (CE15) family.

The protein localises to the secreted. The enzyme catalyses a 4-O-methyl-alpha-D-glucuronosyl ester derivative + H2O = 4-O-methyl-alpha-D-glucuronate derivative + an alcohol + H(+). Its function is as follows. Glucuronoyl esterase which may play a significant role in biomass degradation, as it is considered to disconnect hemicellulose from lignin through the hydrolysis of the ester bond between 4-O-methyl-D-glucuronic acid residues of glucuronoxylans and aromatic alcohols of lignin. The sequence is that of 4-O-methyl-glucuronoyl methylesterase from Neurospora crassa (strain ATCC 24698 / 74-OR23-1A / CBS 708.71 / DSM 1257 / FGSC 987).